The chain runs to 497 residues: Bifunctional protein GlmU (497 aa).

The interval 1–252 is pyrophosphorylase; the sequence is MSQPSARPSA…VWEVEGANDR (252 aa). UDP-N-acetyl-alpha-D-glucosamine contacts are provided by residues 14 to 17, lysine 28, glutamine 86, 91 to 92, 115 to 117, glycine 154, glutamate 169, asparagine 192, and asparagine 250; these read LAAG, GT, and YGD. Aspartate 117 provides a ligand contact to Mg(2+). Mg(2+) is bound at residue asparagine 250. The interval 253–273 is linker; that stretch reads RQLSDLGRRLNERVLRHWMKE. The tract at residues 274–497 is N-acetyltransferase; sequence GVTVVDPSST…AGAEGSGAQG (224 aa). UDP-N-acetyl-alpha-D-glucosamine-binding residues include arginine 355 and lysine 373. Histidine 385 (proton acceptor) is an active-site residue. UDP-N-acetyl-alpha-D-glucosamine is bound by residues tyrosine 388 and asparagine 399. Acetyl-CoA-binding positions include 408 to 409, serine 427, and alanine 445; that span reads NY. Residues 473–497 form a disordered region; that stretch reads PAKRPGTSSAEAARAAGAEGSGAQG. Over residues 480-490 the composition is skewed to low complexity; sequence SSAEAARAAGA.

This sequence in the N-terminal section; belongs to the N-acetylglucosamine-1-phosphate uridyltransferase family. The protein in the C-terminal section; belongs to the transferase hexapeptide repeat family. As to quaternary structure, homotrimer. It depends on Mg(2+) as a cofactor.

It is found in the cytoplasm. The enzyme catalyses alpha-D-glucosamine 1-phosphate + acetyl-CoA = N-acetyl-alpha-D-glucosamine 1-phosphate + CoA + H(+). It carries out the reaction N-acetyl-alpha-D-glucosamine 1-phosphate + UTP + H(+) = UDP-N-acetyl-alpha-D-glucosamine + diphosphate. Its pathway is nucleotide-sugar biosynthesis; UDP-N-acetyl-alpha-D-glucosamine biosynthesis; N-acetyl-alpha-D-glucosamine 1-phosphate from alpha-D-glucosamine 6-phosphate (route II): step 2/2. It functions in the pathway nucleotide-sugar biosynthesis; UDP-N-acetyl-alpha-D-glucosamine biosynthesis; UDP-N-acetyl-alpha-D-glucosamine from N-acetyl-alpha-D-glucosamine 1-phosphate: step 1/1. It participates in bacterial outer membrane biogenesis; LPS lipid A biosynthesis. Functionally, catalyzes the last two sequential reactions in the de novo biosynthetic pathway for UDP-N-acetylglucosamine (UDP-GlcNAc). The C-terminal domain catalyzes the transfer of acetyl group from acetyl coenzyme A to glucosamine-1-phosphate (GlcN-1-P) to produce N-acetylglucosamine-1-phosphate (GlcNAc-1-P), which is converted into UDP-GlcNAc by the transfer of uridine 5-monophosphate (from uridine 5-triphosphate), a reaction catalyzed by the N-terminal domain. The chain is Bifunctional protein GlmU from Micrococcus luteus (strain ATCC 4698 / DSM 20030 / JCM 1464 / CCM 169 / CCUG 5858 / IAM 1056 / NBRC 3333 / NCIMB 9278 / NCTC 2665 / VKM Ac-2230) (Micrococcus lysodeikticus).